Here is a 119-residue protein sequence, read N- to C-terminus: Basic phospholipase A2 (119 aa).

Intrachain disulfides connect Cys-11–Cys-72, Cys-27–Cys-118, Cys-29–Cys-45, Cys-44–Cys-100, Cys-51–Cys-93, Cys-61–Cys-86, and Cys-79–Cys-91. Ca(2+) contacts are provided by Tyr-28, Gly-30, and Gly-32. The active site involves His-48. Asp-49 provides a ligand contact to Ca(2+). Residue Asn-82 is glycosylated (N-linked (GlcNAc...) asparagine). Residue Asp-94 is part of the active site.

Belongs to the phospholipase A2 family. Group I subfamily. D49 sub-subfamily. The cofactor is Ca(2+). In terms of tissue distribution, expressed by the venom gland.

The protein resides in the secreted. It carries out the reaction a 1,2-diacyl-sn-glycero-3-phosphocholine + H2O = a 1-acyl-sn-glycero-3-phosphocholine + a fatty acid + H(+). Its function is as follows. Snake venom phospholipase A2 (PLA2) that shows weak myotoxicity and induces edema in mice. Shows no cytotoxicity in vitro. Has an anticoagulant effect in vitro. PLA2 catalyzes the calcium-dependent hydrolysis of the 2-acyl groups in 3-sn-phosphoglycerides. The sequence is that of Basic phospholipase A2 from Micrurus mipartitus (Red-tailed coral snake).